A 179-amino-acid polypeptide reads, in one-letter code: Large ribosomal subunit protein uL6 (179 aa).

Belongs to the universal ribosomal protein uL6 family. Part of the 50S ribosomal subunit.

Functionally, this protein binds to the 23S rRNA, and is important in its secondary structure. It is located near the subunit interface in the base of the L7/L12 stalk, and near the tRNA binding site of the peptidyltransferase center. The polypeptide is Large ribosomal subunit protein uL6 (Gloeothece citriformis (strain PCC 7424) (Cyanothece sp. (strain PCC 7424))).